The following is a 230-amino-acid chain: Phosphatidylserine decarboxylase proenzyme (230 aa).

Serine 186 serves as the catalytic Schiff-base intermediate with substrate; via pyruvic acid. The residue at position 186 (serine 186) is a Pyruvic acid (Ser); by autocatalysis.

Belongs to the phosphatidylserine decarboxylase family. PSD-A subfamily. In terms of assembly, heterodimer of a large membrane-associated beta subunit and a small pyruvoyl-containing alpha subunit. Pyruvate is required as a cofactor. In terms of processing, is synthesized initially as an inactive proenzyme. Formation of the active enzyme involves a self-maturation process in which the active site pyruvoyl group is generated from an internal serine residue via an autocatalytic post-translational modification. Two non-identical subunits are generated from the proenzyme in this reaction, and the pyruvate is formed at the N-terminus of the alpha chain, which is derived from the carboxyl end of the proenzyme. The post-translation cleavage follows an unusual pathway, termed non-hydrolytic serinolysis, in which the side chain hydroxyl group of the serine supplies its oxygen atom to form the C-terminus of the beta chain, while the remainder of the serine residue undergoes an oxidative deamination to produce ammonia and the pyruvoyl prosthetic group on the alpha chain.

The protein localises to the cell membrane. It catalyses the reaction a 1,2-diacyl-sn-glycero-3-phospho-L-serine + H(+) = a 1,2-diacyl-sn-glycero-3-phosphoethanolamine + CO2. Its pathway is phospholipid metabolism; phosphatidylethanolamine biosynthesis; phosphatidylethanolamine from CDP-diacylglycerol: step 2/2. Its function is as follows. Catalyzes the formation of phosphatidylethanolamine (PtdEtn) from phosphatidylserine (PtdSer). The sequence is that of Phosphatidylserine decarboxylase proenzyme from Wolbachia pipientis wMel.